The sequence spans 161 residues: MKIAGLKQLNTALKEAASGGFSRQASRWLEECGQDFLEIVQSELISTQTIDTEKLLSSFEKGAEDNLWIVQSGGLSLEVGTQLDYASFLNDGHWTSKQDVRWVPGRFQGSRFIYDPAASTGMALKRKWIPGTGYWDHALLLYEQLFEKSLESKLRQWLKKL.

This sequence to B.subtilis YqbI.

The sequence is that of Phage-like element PBSX protein XkdI (xkdI) from Bacillus subtilis (strain 168).